The sequence spans 69 residues: DNA-directed RNA polymerase subunit omega (69 aa).

This sequence belongs to the RNA polymerase subunit omega family. As to quaternary structure, the RNAP catalytic core consists of 2 alpha, 1 beta, 1 beta' and 1 omega subunit. When a sigma factor is associated with the core the holoenzyme is formed, which can initiate transcription.

It catalyses the reaction RNA(n) + a ribonucleoside 5'-triphosphate = RNA(n+1) + diphosphate. Promotes RNA polymerase assembly. Latches the N- and C-terminal regions of the beta' subunit thereby facilitating its interaction with the beta and alpha subunits. The chain is DNA-directed RNA polymerase subunit omega from Pediococcus pentosaceus (strain ATCC 25745 / CCUG 21536 / LMG 10740 / 183-1w).